Reading from the N-terminus, the 52-residue chain is Troponin C, skeletal muscle (52 aa).

2 consecutive EF-hand domains span residues 2 to 37 (KSEE…SGEH) and 38 to 52 (VTDE…DGDK). D15, N17, D19, Y21, and E26 together coordinate Ca(2+).

It belongs to the troponin C family.

In terms of biological role, troponin is the central regulatory protein of striated muscle contraction. Tn consists of three components: Tn-I which is the inhibitor of actomyosin ATPase, Tn-T which contains the binding site for tropomyosin and Tn-C. The binding of calcium to Tn-C abolishes the inhibitory action of Tn on actin filaments. This is Troponin C, skeletal muscle from Protopterus dolloi (Slender lungfish).